The primary structure comprises 430 residues: UDP-N-acetylmuramoylalanine--D-glutamate ligase (430 aa).

Gly-109–Thr-115 serves as a coordination point for ATP.

It belongs to the MurCDEF family.

It localises to the cytoplasm. The catalysed reaction is UDP-N-acetyl-alpha-D-muramoyl-L-alanine + D-glutamate + ATP = UDP-N-acetyl-alpha-D-muramoyl-L-alanyl-D-glutamate + ADP + phosphate + H(+). Its pathway is cell wall biogenesis; peptidoglycan biosynthesis. Cell wall formation. Catalyzes the addition of glutamate to the nucleotide precursor UDP-N-acetylmuramoyl-L-alanine (UMA). The polypeptide is UDP-N-acetylmuramoylalanine--D-glutamate ligase (Thermotoga sp. (strain RQ2)).